The sequence spans 186 residues: Large ribosomal subunit protein uL5 (186 aa).

This sequence belongs to the universal ribosomal protein uL5 family. In terms of assembly, part of the 50S ribosomal subunit; part of the 5S rRNA/L5/L18/L25 subcomplex. Contacts the 5S rRNA and the P site tRNA. Forms a bridge to the 30S subunit in the 70S ribosome.

This is one of the proteins that bind and probably mediate the attachment of the 5S RNA into the large ribosomal subunit, where it forms part of the central protuberance. In the 70S ribosome it contacts protein S13 of the 30S subunit (bridge B1b), connecting the 2 subunits; this bridge is implicated in subunit movement. Contacts the P site tRNA; the 5S rRNA and some of its associated proteins might help stabilize positioning of ribosome-bound tRNAs. The chain is Large ribosomal subunit protein uL5 from Porphyromonas gingivalis (strain ATCC 33277 / DSM 20709 / CIP 103683 / JCM 12257 / NCTC 11834 / 2561).